We begin with the raw amino-acid sequence, 226 residues long: Lipoprotein-releasing system ATP-binding protein LolD (226 aa).

The region spanning 5-226 is the ABC transporter domain; it reads LKATNINKIY…LLRNGHWENY (222 aa). ATP is bound at residue 41-48; it reads GTSGSGKS.

The protein belongs to the ABC transporter superfamily. Lipoprotein translocase (TC 3.A.1.125) family. In terms of assembly, the complex is composed of two ATP-binding proteins (LolD) and two transmembrane proteins (LolC and LolE).

Its subcellular location is the cell inner membrane. In terms of biological role, part of the ABC transporter complex LolCDE involved in the translocation of mature outer membrane-directed lipoproteins, from the inner membrane to the periplasmic chaperone, LolA. Responsible for the formation of the LolA-lipoprotein complex in an ATP-dependent manner. This Psychrobacter cryohalolentis (strain ATCC BAA-1226 / DSM 17306 / VKM B-2378 / K5) protein is Lipoprotein-releasing system ATP-binding protein LolD.